We begin with the raw amino-acid sequence, 232 residues long: Phosphatidylserine decarboxylase proenzyme (232 aa).

Catalysis depends on Ser-190, which acts as the Schiff-base intermediate with substrate; via pyruvic acid. A Pyruvic acid (Ser); by autocatalysis modification is found at Ser-190.

The protein belongs to the phosphatidylserine decarboxylase family. PSD-A subfamily. In terms of assembly, heterodimer of a large membrane-associated beta subunit and a small pyruvoyl-containing alpha subunit. Pyruvate is required as a cofactor. In terms of processing, is synthesized initially as an inactive proenzyme. Formation of the active enzyme involves a self-maturation process in which the active site pyruvoyl group is generated from an internal serine residue via an autocatalytic post-translational modification. Two non-identical subunits are generated from the proenzyme in this reaction, and the pyruvate is formed at the N-terminus of the alpha chain, which is derived from the carboxyl end of the proenzyme. The post-translation cleavage follows an unusual pathway, termed non-hydrolytic serinolysis, in which the side chain hydroxyl group of the serine supplies its oxygen atom to form the C-terminus of the beta chain, while the remainder of the serine residue undergoes an oxidative deamination to produce ammonia and the pyruvoyl prosthetic group on the alpha chain.

The protein resides in the cell membrane. It catalyses the reaction a 1,2-diacyl-sn-glycero-3-phospho-L-serine + H(+) = a 1,2-diacyl-sn-glycero-3-phosphoethanolamine + CO2. Its pathway is phospholipid metabolism; phosphatidylethanolamine biosynthesis; phosphatidylethanolamine from CDP-diacylglycerol: step 2/2. Catalyzes the formation of phosphatidylethanolamine (PtdEtn) from phosphatidylserine (PtdSer). In Rhizobium johnstonii (strain DSM 114642 / LMG 32736 / 3841) (Rhizobium leguminosarum bv. viciae), this protein is Phosphatidylserine decarboxylase proenzyme.